The primary structure comprises 257 residues: 4-hydroxy-tetrahydrodipicolinate reductase (257 aa).

7-12 (GCLGRM) lines the NAD(+) pocket. Arg34 is an NADP(+) binding site. NAD(+)-binding positions include 96–98 (GTT) and 117–120 (SCNM). His149 serves as the catalytic Proton donor/acceptor. Position 150 (His150) interacts with (S)-2,3,4,5-tetrahydrodipicolinate. The Proton donor role is filled by Lys153. 159 to 160 (GT) is a binding site for (S)-2,3,4,5-tetrahydrodipicolinate.

This sequence belongs to the DapB family.

It localises to the cytoplasm. The catalysed reaction is (S)-2,3,4,5-tetrahydrodipicolinate + NAD(+) + H2O = (2S,4S)-4-hydroxy-2,3,4,5-tetrahydrodipicolinate + NADH + H(+). It carries out the reaction (S)-2,3,4,5-tetrahydrodipicolinate + NADP(+) + H2O = (2S,4S)-4-hydroxy-2,3,4,5-tetrahydrodipicolinate + NADPH + H(+). The protein operates within amino-acid biosynthesis; L-lysine biosynthesis via DAP pathway; (S)-tetrahydrodipicolinate from L-aspartate: step 4/4. Its function is as follows. Catalyzes the conversion of 4-hydroxy-tetrahydrodipicolinate (HTPA) to tetrahydrodipicolinate. The protein is 4-hydroxy-tetrahydrodipicolinate reductase of Anaplasma marginale (strain St. Maries).